Consider the following 242-residue polypeptide: Protein GrpE (242 aa).

Disordered stretches follow at residues 1–75 and 93–136; these read MSDD…DDEL and VADL…QQIK. Low complexity predominate over residues 23-37; it reads DAESSAAEDASAADD. Residues 38-49 are compositionally biased toward acidic residues; sequence AAPEESTGDEQA. A compositionally biased stretch (polar residues) spans 50–64; that stretch reads GETTAESSDAESVTV. Acidic residues predominate over residues 96 to 108; the sequence is LETERDEAEETAS. The segment covering 124-133 has biased composition (basic residues); that stretch reads YKKRAKKRQQ.

This sequence belongs to the GrpE family. As to quaternary structure, homodimer.

It localises to the cytoplasm. Functionally, participates actively in the response to hyperosmotic and heat shock by preventing the aggregation of stress-denatured proteins, in association with DnaK and GrpE. It is the nucleotide exchange factor for DnaK and may function as a thermosensor. Unfolded proteins bind initially to DnaJ; upon interaction with the DnaJ-bound protein, DnaK hydrolyzes its bound ATP, resulting in the formation of a stable complex. GrpE releases ADP from DnaK; ATP binding to DnaK triggers the release of the substrate protein, thus completing the reaction cycle. Several rounds of ATP-dependent interactions between DnaJ, DnaK and GrpE are required for fully efficient folding. The protein is Protein GrpE of Haloferax mediterranei (strain ATCC 33500 / DSM 1411 / JCM 8866 / NBRC 14739 / NCIMB 2177 / R-4) (Halobacterium mediterranei).